A 155-amino-acid polypeptide reads, in one-letter code: Transcriptional repressor NrdR (155 aa).

A zinc finger spans residues 3–34 (CPFCHAEETKVVDSRLVADGAQVRRRRECLEC). In terms of domain architecture, ATP-cone spans 49–139 (PLIIKRDGRR…VYKRFKDVSD (91 aa)).

It belongs to the NrdR family. It depends on Zn(2+) as a cofactor.

In terms of biological role, negatively regulates transcription of bacterial ribonucleotide reductase nrd genes and operons by binding to NrdR-boxes. This is Transcriptional repressor NrdR from Legionella pneumophila (strain Lens).